The chain runs to 205 residues: MNDLEKKFYELPELPYPYDALEPHISREQLTIHHQKHHQAYVDGANALLRKLDEARESDTDVDIKAALKELSFHVGGYVLHLFFWGNMGPADECGGEPSGKLAEYIEKDFGSFERFRKEFSQAAISAEGSGWAVLTYCQRTDRLFIMQVEKHNVNVIPHFRILLVLDVWEHAYYIDYRNVRPDYVEAFWNIVNWKEVEKRFEDIL.

Positions 33, 81, 167, and 171 each coordinate Fe cation.

This sequence belongs to the iron/manganese superoxide dismutase family. Homotetramer. It depends on Fe cation as a cofactor.

The enzyme catalyses 2 superoxide + 2 H(+) = H2O2 + O2. Functionally, destroys superoxide anion radicals which are normally produced within the cells and which are toxic to biological systems. The polypeptide is Superoxide dismutase [Fe] (sod) (Methanothermobacter thermautotrophicus (strain ATCC 29096 / DSM 1053 / JCM 10044 / NBRC 100330 / Delta H) (Methanobacterium thermoautotrophicum)).